A 466-amino-acid chain; its full sequence is Citrate synthase, mitochondrial (466 aa).

Residues 1–27 (MALLTAAARLLGTKNASCLVLAARHAS) constitute a mitochondrion transit peptide. An SIFI-degron motif is present at residues 2–21 (ALLTAAARLLGTKNASCLVL). The residue at position 57 (Lys-57) is an N6-succinyllysine. Residue Lys-76 is modified to N6-acetyllysine; alternate. Lys-76 bears the N6-succinyllysine; alternate mark. 2 positions are modified to N6-succinyllysine: Lys-103 and Lys-193. Residue His-301 is part of the active site. N6-acetyllysine; alternate occurs at positions 321 and 327. 2 positions are modified to N6-succinyllysine; alternate: Lys-321 and Lys-327. The active site involves His-347. Residue Arg-356 coordinates oxaloacetate. At Lys-375 the chain carries N6-acetyllysine; alternate. N6-succinyllysine; alternate is present on Lys-375. Lys-382 bears the N6-acetyllysine mark. Lys-393 carries the N6-acetyllysine; alternate modification. Position 393 is an N6-succinyllysine; alternate (Lys-393). Lys-395 carries the N6,N6,N6-trimethyllysine modification. Asp-402 is an active-site residue. Oxaloacetate is bound by residues Arg-428 and Arg-448. Lys-450 carries the post-translational modification N6-succinyllysine. Residue Lys-459 is modified to N6-acetyllysine; alternate. The residue at position 459 (Lys-459) is an N6-succinyllysine; alternate.

This sequence belongs to the citrate synthase family. As to quaternary structure, homodimer. In terms of processing, methylated. Trimethylation at Lys-395 by CSKMT decreases citrate synthase activity. Post-translationally, in response to mitochondrial stress, the precursor protein is ubiquitinated by the SIFI complex in the cytoplasm before mitochondrial import, leading to its degradation. Within the SIFI complex, UBR4 initiates ubiquitin chain that are further elongated or branched by KCMF1.

The protein resides in the mitochondrion matrix. It catalyses the reaction oxaloacetate + acetyl-CoA + H2O = citrate + CoA + H(+). It functions in the pathway carbohydrate metabolism; tricarboxylic acid cycle; isocitrate from oxaloacetate: step 1/2. In terms of biological role, key enzyme of the Krebs tricarboxylic acid cycle which catalyzes the synthesis of citrate from acetyl coenzyme A and oxaloacetate. This chain is Citrate synthase, mitochondrial (CS), found in Homo sapiens (Human).